The sequence spans 265 residues: Capsule polysaccharide export inner-membrane protein CtrC (265 aa).

Helical transmembrane passes span 37–57 (IGFL…VLMW), 67–84 (TLNI…LMMW), 121–141 (IAGA…IGWI), 148–168 (FYML…GLVI), 178–198 (FGKI…AFFF), and 238–258 (WYIV…VSKF). One can recognise an ABC transmembrane type-2 domain in the interval 37 to 258 (IGFLWLFVEP…LFGLAMVSKF (222 aa)).

This sequence belongs to the ABC-2 integral membrane protein family.

It localises to the cell inner membrane. In terms of biological role, may form an ATP-driven capsule polysaccharide export apparatus, in association with the CtrB and CtrD proteins. The polypeptide is Capsule polysaccharide export inner-membrane protein CtrC (ctrC) (Neisseria meningitidis serogroup B (strain ATCC BAA-335 / MC58)).